Consider the following 159-residue polypeptide: Carbohydrate sulfotransferase 15 (159 aa).

Over 1 to 159 (SGTTDFYRRI…YQPHNERLVK (159 aa)) the chain is Lumenal. Asparagine 42 and asparagine 112 each carry an N-linked (GlcNAc...) asparagine glycan.

This sequence belongs to the sulfotransferase 1 family. A divalent metal cation serves as cofactor. The cofactor is glutathione.

Its subcellular location is the golgi apparatus membrane. The enzyme catalyses dermatan 4'-sulfate + n 3'-phosphoadenylyl sulfate = dermatan 4',6'-bissulfate + n adenosine 3',5'-bisphosphate + n H(+). The catalysed reaction is chondroitin 4'-sulfate + n 3'-phosphoadenylyl sulfate = chondroitin 4',6'-bissulfate + n adenosine 3',5'-bisphosphate + n H(+). Its function is as follows. Sulfotransferase that transfers sulfate from 3'-phosphoadenosine 5'-phosphosulfate (PAPS) to the C-6 hydroxyl group of the GalNAc 4-sulfate residue of chondroitin sulfate A and forms chondroitin sulfate E containing GlcA-GalNAc(4,6-SO(4)) repeating units. The protein is Carbohydrate sulfotransferase 15 (GALNAC4S6ST) of Nototodarus sloanii (Wellington flying squid).